The primary structure comprises 156 residues: Small ribosomal subunit protein uS7 (156 aa).

Belongs to the universal ribosomal protein uS7 family. In terms of assembly, part of the 30S ribosomal subunit. Contacts proteins S9 and S11.

Its function is as follows. One of the primary rRNA binding proteins, it binds directly to 16S rRNA where it nucleates assembly of the head domain of the 30S subunit. Is located at the subunit interface close to the decoding center, probably blocks exit of the E-site tRNA. The protein is Small ribosomal subunit protein uS7 of Pediococcus pentosaceus (strain ATCC 25745 / CCUG 21536 / LMG 10740 / 183-1w).